A 268-amino-acid chain; its full sequence is tRNA pseudouridine synthase A (268 aa).

The Nucleophile role is filled by aspartate 63. A substrate-binding site is contributed by tyrosine 122.

It belongs to the tRNA pseudouridine synthase TruA family. As to quaternary structure, homodimer.

It catalyses the reaction uridine(38/39/40) in tRNA = pseudouridine(38/39/40) in tRNA. Formation of pseudouridine at positions 38, 39 and 40 in the anticodon stem and loop of transfer RNAs. This chain is tRNA pseudouridine synthase A, found in Treponema denticola (strain ATCC 35405 / DSM 14222 / CIP 103919 / JCM 8153 / KCTC 15104).